Here is a 640-residue protein sequence, read N- to C-terminus: Threonine--tRNA ligase (640 aa).

The 61-residue stretch at 1 to 61 (MPIITLPNGD…TEDATLQIIT (61 aa)) folds into the TGS domain. The tract at residues 242-533 (DHRKIGKALD…LIEHYAGFMP (292 aa)) is catalytic. Residues Cys-333, His-384, and His-510 each coordinate Zn(2+).

The protein belongs to the class-II aminoacyl-tRNA synthetase family. As to quaternary structure, homodimer. Requires Zn(2+) as cofactor.

It localises to the cytoplasm. It catalyses the reaction tRNA(Thr) + L-threonine + ATP = L-threonyl-tRNA(Thr) + AMP + diphosphate + H(+). Catalyzes the attachment of threonine to tRNA(Thr) in a two-step reaction: L-threonine is first activated by ATP to form Thr-AMP and then transferred to the acceptor end of tRNA(Thr). Also edits incorrectly charged L-seryl-tRNA(Thr). The chain is Threonine--tRNA ligase from Acinetobacter baylyi (strain ATCC 33305 / BD413 / ADP1).